The primary structure comprises 85 residues: UPF0386 protein VF_0869 (85 aa).

Belongs to the UPF0386 family.

In Aliivibrio fischeri (strain ATCC 700601 / ES114) (Vibrio fischeri), this protein is UPF0386 protein VF_0869.